The following is a 397-amino-acid chain: Argininosuccinate synthase (397 aa).

An ATP-binding site is contributed by alanine 8–serine 16. Residues tyrosine 86 and serine 91 each coordinate L-citrulline. Glycine 116 lines the ATP pocket. The L-aspartate site is built by threonine 118, asparagine 122, and aspartate 123. Asparagine 122 is a binding site for L-citrulline. L-citrulline contacts are provided by arginine 126, serine 175, serine 184, glutamate 260, and tyrosine 272.

The protein belongs to the argininosuccinate synthase family. Type 1 subfamily. As to quaternary structure, homotetramer.

The protein resides in the cytoplasm. It catalyses the reaction L-citrulline + L-aspartate + ATP = 2-(N(omega)-L-arginino)succinate + AMP + diphosphate + H(+). The protein operates within amino-acid biosynthesis; L-arginine biosynthesis; L-arginine from L-ornithine and carbamoyl phosphate: step 2/3. This chain is Argininosuccinate synthase, found in Clostridium botulinum (strain Kyoto / Type A2).